The primary structure comprises 437 residues: Adenosylhomocysteinase (437 aa).

The substrate site is built by threonine 54, aspartate 125, and glutamate 170. 171–173 contributes to the NAD(+) binding site; sequence TTT. Residues lysine 200 and aspartate 204 each coordinate substrate. NAD(+) is bound by residues asparagine 205, 234-239, glutamate 258, asparagine 293, 314-316, and asparagine 361; these read GYGWVG and AGH.

It belongs to the adenosylhomocysteinase family. Requires NAD(+) as cofactor.

The protein localises to the cytoplasm. It catalyses the reaction S-adenosyl-L-homocysteine + H2O = L-homocysteine + adenosine. It participates in amino-acid biosynthesis; L-homocysteine biosynthesis; L-homocysteine from S-adenosyl-L-homocysteine: step 1/1. May play a key role in the regulation of the intracellular concentration of adenosylhomocysteine. This chain is Adenosylhomocysteinase, found in Pyrobaculum aerophilum (strain ATCC 51768 / DSM 7523 / JCM 9630 / CIP 104966 / NBRC 100827 / IM2).